The primary structure comprises 174 residues: Crossover junction endodeoxyribonuclease RuvC (174 aa).

Residues aspartate 8, glutamate 67, and aspartate 139 contribute to the active site. Aspartate 8, glutamate 67, and aspartate 139 together coordinate Mg(2+).

The protein belongs to the RuvC family. Homodimer which binds Holliday junction (HJ) DNA. The HJ becomes 2-fold symmetrical on binding to RuvC with unstacked arms; it has a different conformation from HJ DNA in complex with RuvA. In the full resolvosome a probable DNA-RuvA(4)-RuvB(12)-RuvC(2) complex forms which resolves the HJ. It depends on Mg(2+) as a cofactor.

Its subcellular location is the cytoplasm. The catalysed reaction is Endonucleolytic cleavage at a junction such as a reciprocal single-stranded crossover between two homologous DNA duplexes (Holliday junction).. Its function is as follows. The RuvA-RuvB-RuvC complex processes Holliday junction (HJ) DNA during genetic recombination and DNA repair. Endonuclease that resolves HJ intermediates. Cleaves cruciform DNA by making single-stranded nicks across the HJ at symmetrical positions within the homologous arms, yielding a 5'-phosphate and a 3'-hydroxyl group; requires a central core of homology in the junction. The consensus cleavage sequence is 5'-(A/T)TT(C/G)-3'. Cleavage occurs on the 3'-side of the TT dinucleotide at the point of strand exchange. HJ branch migration catalyzed by RuvA-RuvB allows RuvC to scan DNA until it finds its consensus sequence, where it cleaves and resolves the cruciform DNA. The chain is Crossover junction endodeoxyribonuclease RuvC from Pseudomonas paraeruginosa (strain DSM 24068 / PA7) (Pseudomonas aeruginosa (strain PA7)).